Consider the following 673-residue polypeptide: Beta-galactosidase GalA (673 aa).

Arginine 105 contributes to the substrate binding site. Residue cysteine 109 coordinates Zn(2+). Asparagine 143 lines the substrate pocket. Catalysis depends on glutamate 144, which acts as the Proton donor. Zn(2+) is bound by residues cysteine 149, cysteine 151, and cysteine 154. The active-site Nucleophile is glutamate 308. Residues tryptophan 316 and 356–359 (EKFH) each bind substrate.

It belongs to the glycosyl hydrolase 42 family. In terms of assembly, homodimer.

The enzyme catalyses Hydrolysis of terminal non-reducing beta-D-galactose residues in beta-D-galactosides.. With respect to regulation, inhibited by hydrolysis end products D-galactose and D-glucose. The hydrolysis of o-nitrophenyl-beta-D-galactopyranoside (ONPG) is slightly activated by monovalent ions, Na(+) and K(+). Concentrations of these ions in the range of 1-100 mM exert the stimulating effects. The presence of 1 mM Mn(2+) together with the presence of 10 mM Na(+) slightly stimulates the activity, while presence of 10 mM Mn(2+) inhibits the activity by about 40%. Functionally, catalyzes the hydrolysis of lactose to its constituent monosaccharides glucose and galactose. Possesses a low level of transgalactosylation activity for the production of galacto-oligosaccharides (GOS) from lactose. This chain is Beta-galactosidase GalA, found in Bacillus licheniformis (strain ATCC 14580 / DSM 13 / JCM 2505 / CCUG 7422 / NBRC 12200 / NCIMB 9375 / NCTC 10341 / NRRL NRS-1264 / Gibson 46).